A 59-amino-acid polypeptide reads, in one-letter code: Large ribosomal subunit protein bL32 (59 aa).

The disordered stretch occupies residues 1–25 (MAVQQNKKSPSKRGMHRAHDFLTAP).

Belongs to the bacterial ribosomal protein bL32 family.

The chain is Large ribosomal subunit protein bL32 from Azoarcus sp. (strain BH72).